Consider the following 186-residue polypeptide: CoB--CoM heterodisulfide reductase iron-sulfur subunit C 2 (186 aa).

4Fe-4S ferredoxin-type domains are found at residues 26–56 (GEDI…AYRT) and 67–99 (LDDV…TEII). 8 residues coordinate [4Fe-4S] cluster: cysteine 36, cysteine 39, cysteine 42, cysteine 46, cysteine 79, cysteine 82, cysteine 85, and cysteine 89.

The protein belongs to the HdrC family. In terms of assembly, the heterodisulfide reductase is composed of three subunits; HdrA, HdrB and HdrC. [4Fe-4S] cluster is required as a cofactor.

It functions in the pathway cofactor metabolism; coenzyme M-coenzyme B heterodisulfide reduction; coenzyme B and coenzyme M from coenzyme M-coenzyme B heterodisulfide: step 1/1. Functionally, part of a complex that catalyzes the reversible reduction of CoM-S-S-CoB to the thiol-coenzymes H-S-CoM (coenzyme M) and H-S-CoB (coenzyme B). The polypeptide is CoB--CoM heterodisulfide reductase iron-sulfur subunit C 2 (hdrC2) (Methanocaldococcus jannaschii (strain ATCC 43067 / DSM 2661 / JAL-1 / JCM 10045 / NBRC 100440) (Methanococcus jannaschii)).